The primary structure comprises 661 residues: uncharacterized protein (661 aa).

A run of 16 helical transmembrane segments spans residues 27 to 47, 68 to 88, 116 to 136, 150 to 170, 179 to 199, 214 to 234, 251 to 271, 279 to 299, 313 to 333, 369 to 389, 396 to 416, 435 to 455, 488 to 508, 519 to 539, 552 to 572, and 599 to 619; these read LAIG…VSGA, VGFF…IHVV, LWLG…TGVG, VAAS…LVVA, WLGH…TAVT, AAIV…AAAL, GALA…GWAV, GLLA…RLLV, GAAL…VMTA, SLIG…FAAL, WPVG…FTSG, MTLN…TLAL, PITA…TPLF, EFMA…IIGI, IGLL…LMTM, and GGGI…VALV.

This sequence to M.leprae ML1998.

Its subcellular location is the cell membrane. This is an uncharacterized protein from Mycobacterium tuberculosis (strain CDC 1551 / Oshkosh).